Consider the following 342-residue polypeptide: MSEKTILRALKGERLPVPPVWMMRQAGRYLPEYRATRAQAGDFLSLCYTPDLAAEVTLQPIRRYGFDAAILFADILLLPQALGLDLWFVTGEGPRLSTVTSAAGVAALKPAAAIHDTLSPVYETVRILARELPRETTLIGFAGAPWTVATYMVAGRGTPDQAPAHAFKAEDRAAFAALIDRITEATIDYLSAQIEAGAEVVKLFDSWAGSLKGRDFDDFAVEPARRIIAALKARHPGIPVIAFPREAGPRYAGFARATGADCVALDNSVSADWAAAEVQKDGCVQGNLDPRLLVSGGEELVSETRRIVQAFSRGPHIFNLGHGITPEADPENVARMLEAIRG.

Substrate is bound by residues 24–28 (RQAGR), Asp-74, Tyr-151, Ser-206, and His-322.

Belongs to the uroporphyrinogen decarboxylase family. As to quaternary structure, homodimer.

The protein localises to the cytoplasm. The catalysed reaction is uroporphyrinogen III + 4 H(+) = coproporphyrinogen III + 4 CO2. It participates in porphyrin-containing compound metabolism; protoporphyrin-IX biosynthesis; coproporphyrinogen-III from 5-aminolevulinate: step 4/4. Catalyzes the decarboxylation of four acetate groups of uroporphyrinogen-III to yield coproporphyrinogen-III. In Paracoccus denitrificans (strain Pd 1222), this protein is Uroporphyrinogen decarboxylase.